The chain runs to 362 residues: Aminomethyltransferase (362 aa).

Belongs to the GcvT family. In terms of assembly, the glycine cleavage system is composed of four proteins: P, T, L and H.

The catalysed reaction is N(6)-[(R)-S(8)-aminomethyldihydrolipoyl]-L-lysyl-[protein] + (6S)-5,6,7,8-tetrahydrofolate = N(6)-[(R)-dihydrolipoyl]-L-lysyl-[protein] + (6R)-5,10-methylene-5,6,7,8-tetrahydrofolate + NH4(+). Functionally, the glycine cleavage system catalyzes the degradation of glycine. The polypeptide is Aminomethyltransferase (Bacillus subtilis (strain 168)).